We begin with the raw amino-acid sequence, 165 residues long: Putative pre-16S rRNA nuclease (165 aa).

The protein belongs to the YqgF nuclease family.

Its subcellular location is the cytoplasm. Its function is as follows. Could be a nuclease involved in processing of the 5'-end of pre-16S rRNA. In Brucella anthropi (strain ATCC 49188 / DSM 6882 / CCUG 24695 / JCM 21032 / LMG 3331 / NBRC 15819 / NCTC 12168 / Alc 37) (Ochrobactrum anthropi), this protein is Putative pre-16S rRNA nuclease.